Here is a 281-residue protein sequence, read N- to C-terminus: sn-glycerol-3-phosphate transport system permease protein UgpE (281 aa).

Helical transmembrane passes span 14 to 34 (IMLIIGVLLILFPLYVAFVAA), 85 to 105 (FAITVGKITVSILSAYAIVYF), 113 to 133 (FFWLIFLTLMLPVEVRIFPTI), 142 to 162 (LDSYTGLTLPLMASATATFLF), 201 to 221 (AALFVITFIYGWNQYLWPILI), and 247 to 267 (WNQVMAAMILTLIPPVVVVLL). The 192-residue stretch at 77–268 (LLNSFVMAFA…IPPVVVVLLM (192 aa)) folds into the ABC transmembrane type-1 domain.

The protein belongs to the binding-protein-dependent transport system permease family. UgpAE subfamily. As to quaternary structure, the complex is composed of two ATP-binding proteins (UgpC), two transmembrane proteins (UgpA and UgpE) and a solute-binding protein (UgpB).

The protein resides in the cell inner membrane. Functionally, part of the ABC transporter complex UgpBAEC involved in sn-glycerol-3-phosphate (G3P) import. Probably responsible for the translocation of the substrate across the membrane. The sequence is that of sn-glycerol-3-phosphate transport system permease protein UgpE (ugpE) from Yersinia pestis bv. Antiqua (strain Antiqua).